Reading from the N-terminus, the 338-residue chain is Ketol-acid reductoisomerase (NADP(+)) (338 aa).

In terms of domain architecture, KARI N-terminal Rossmann spans 1 to 181 (MNVYYDKDCD…GGGRSGIIET (181 aa)). Residues 24-27 (YGSQ), R47, S50, S52, and 82-85 (DEFQ) each bind NADP(+). The active site involves H107. An NADP(+)-binding site is contributed by G133. The region spanning 182-327 (TFKDETETDL…AKLRGMMPWI (146 aa)) is the KARI C-terminal knotted domain. Residues D190, E194, E226, and E230 each coordinate Mg(2+). S251 serves as a coordination point for substrate.

The protein belongs to the ketol-acid reductoisomerase family. It depends on Mg(2+) as a cofactor.

The catalysed reaction is (2R)-2,3-dihydroxy-3-methylbutanoate + NADP(+) = (2S)-2-acetolactate + NADPH + H(+). It catalyses the reaction (2R,3R)-2,3-dihydroxy-3-methylpentanoate + NADP(+) = (S)-2-ethyl-2-hydroxy-3-oxobutanoate + NADPH + H(+). Its pathway is amino-acid biosynthesis; L-isoleucine biosynthesis; L-isoleucine from 2-oxobutanoate: step 2/4. The protein operates within amino-acid biosynthesis; L-valine biosynthesis; L-valine from pyruvate: step 2/4. Its function is as follows. Involved in the biosynthesis of branched-chain amino acids (BCAA). Catalyzes an alkyl-migration followed by a ketol-acid reduction of (S)-2-acetolactate (S2AL) to yield (R)-2,3-dihydroxy-isovalerate. In the isomerase reaction, S2AL is rearranged via a Mg-dependent methyl migration to produce 3-hydroxy-3-methyl-2-ketobutyrate (HMKB). In the reductase reaction, this 2-ketoacid undergoes a metal-dependent reduction by NADPH to yield (R)-2,3-dihydroxy-isovalerate. This Psychrobacter cryohalolentis (strain ATCC BAA-1226 / DSM 17306 / VKM B-2378 / K5) protein is Ketol-acid reductoisomerase (NADP(+)).